Here is a 243-residue protein sequence, read N- to C-terminus: Ubiquinone biosynthesis O-methyltransferase (243 aa).

Residues R44, G64, D85, and M129 each contribute to the S-adenosyl-L-methionine site.

It belongs to the methyltransferase superfamily. UbiG/COQ3 family.

The catalysed reaction is a 3-demethylubiquinol + S-adenosyl-L-methionine = a ubiquinol + S-adenosyl-L-homocysteine + H(+). The enzyme catalyses a 3-(all-trans-polyprenyl)benzene-1,2-diol + S-adenosyl-L-methionine = a 2-methoxy-6-(all-trans-polyprenyl)phenol + S-adenosyl-L-homocysteine + H(+). It participates in cofactor biosynthesis; ubiquinone biosynthesis. Its function is as follows. O-methyltransferase that catalyzes the 2 O-methylation steps in the ubiquinone biosynthetic pathway. This Erwinia tasmaniensis (strain DSM 17950 / CFBP 7177 / CIP 109463 / NCPPB 4357 / Et1/99) protein is Ubiquinone biosynthesis O-methyltransferase.